A 205-amino-acid polypeptide reads, in one-letter code: MRPLTPRQSEILELIKDNLHATGMPPTRAEIAHKLGFRSANSAEEHLKALARKGVIEILPGMSRGIRLVGDDYDIADGLPLIGQVAAGEPLLAEQHVEGHYKIDESLFHPAASFLLKVNGMSMRDIGILDGDLLAVHKTEQARNGQIVVARVEDEVTVKRFEQRGKTILLHPENEDFSTITVNLAEQVFAIEGLAVGVIRNGATL.

The H-T-H motif DNA-binding region spans 28-48 (RAEIAHKLGFRSANSAEEHLK). Active-site for autocatalytic cleavage activity residues include Ser-122 and Lys-159.

This sequence belongs to the peptidase S24 family. In terms of assembly, homodimer.

The catalysed reaction is Hydrolysis of Ala-|-Gly bond in repressor LexA.. Its function is as follows. Represses a number of genes involved in the response to DNA damage (SOS response), including recA and lexA. In the presence of single-stranded DNA, RecA interacts with LexA causing an autocatalytic cleavage which disrupts the DNA-binding part of LexA, leading to derepression of the SOS regulon and eventually DNA repair. This is LexA repressor from Idiomarina loihiensis (strain ATCC BAA-735 / DSM 15497 / L2-TR).